Consider the following 448-residue polypeptide: Putative vacuolar cation/proton exchanger 6 (448 aa).

The Cytoplasmic segment spans residues 31–81 (MGLVNEVELKSLLEQETDSPQTNAASLMEQGSLRERRAKAPRNSVVQSFKI). Residues 82-102 (VILSNKLNLLLPFGPLAILVH) form a helical membrane-spanning segment. Residues 103-109 (YLTDNKG) lie on the Extracellular side of the membrane. The chain crosses the membrane as a helical span at residues 110-130 (WFFLLSLVGITPLAERLGYAT). The Cytoplasmic portion of the chain corresponds to 131-141 (EQLSCYTGATV). The chain crosses the membrane as a helical span at residues 142-162 (GGLLNATFGNVIELIISIIAL). Residues 150 to 185 (GNVIELIISIIALKNGMIRVVQLTLLGSILSNILLV) form a cation selection region. The Extracellular segment spans residues 163–178 (KNGMIRVVQLTLLGSI). The helical transmembrane segment at 179–199 (LSNILLVLGCAFFCGGLVFPG) threads the bilayer. At 200-209 (KDQVFDKRNA) the chain is on the cytoplasmic side. Residues 210 to 230 (VVSSGMLLMAVMGLLFPTFLH) form a helical membrane-spanning segment. Over 231–243 (YTHSEVHAGSSEL) the chain is Extracellular. A helical membrane pass occupies residues 244–264 (ALSRFISCIMLVAYAAYLFFQ). Topologically, residues 265 to 295 (LKSQPSFYTEKTNQNEETSNDDEDPEISKWE) are cytoplasmic. A helical transmembrane segment spans residues 296 to 316 (AIIWLSIFTAWVSLLSGYLVD). Topologically, residues 317 to 334 (AIEGTSVSWKIPISFISV) are extracellular. A helical transmembrane segment spans residues 335–355 (ILLPIVGNAAEHAGAIMFAMK). Positions 341 to 376 (GNAAEHAGAIMFAMKDKLDLSLGVAIGSSIQISMFA) are cation selection. Topologically, residues 356 to 363 (DKLDLSLG) are cytoplasmic. Residues 364–384 (VAIGSSIQISMFAVPFCVVIG) traverse the membrane as a helical segment. The Extracellular segment spans residues 385-393 (WMMGAQMDL). The chain crosses the membrane as a helical span at residues 394–414 (NLQLFETATLLITVIVVAFFL). Residues 415 to 425 (QLEGTSNYFKR) lie on the Cytoplasmic side of the membrane. A helical transmembrane segment spans residues 426–446 (LMLILCYLIVAASFFVHEDPH). At 447–448 (QG) the chain is on the extracellular side.

Belongs to the Ca(2+):cation antiporter (CaCA) (TC 2.A.19) family. Cation/proton exchanger (CAX) subfamily.

It localises to the vacuole membrane. Its function is as follows. Vacuolar cation/proton exchanger (CAX). Translocates Ca(2+) and other metal ions into vacuoles using the proton gradient formed by H(+)-ATPase and H(+)-pyrophosphatase. The sequence is that of Putative vacuolar cation/proton exchanger 6 (CAX6) from Arabidopsis thaliana (Mouse-ear cress).